The primary structure comprises 343 residues: Anthranilate 1,2-dioxygenase electron transfer component (343 aa).

Residues 3 to 96 enclose the 2Fe-2S ferredoxin-type domain; the sequence is HSVALNFADG…NAAFYFDHHS (94 aa). 4 residues coordinate [2Fe-2S] cluster: cysteine 40, cysteine 45, cysteine 48, and cysteine 80. The interval 98-338 is ferredoxin-reductase; the sequence is ICNAGETLKI…HIYSEKFLQS (241 aa). Residues 103–206 form the FAD-binding FR-type domain; it reads ETLKIATVVT…EAPLGSFYLR (104 aa).

The protein belongs to the bacterial ring-hydroxylating dioxygenase ferredoxin reductase family. In terms of assembly, monomer. It is part of the anthranilate dioxygenase two component enzyme system. The other component is an oxygenase component consisting of 3 large (AntA) and 3 small (AntB) subunits. FAD serves as cofactor. It depends on [2Fe-2S] cluster as a cofactor.

The enzyme catalyses 2 reduced [2Fe-2S]-[ferredoxin] + NAD(+) + H(+) = 2 oxidized [2Fe-2S]-[ferredoxin] + NADH. The protein operates within aromatic compound metabolism; anthranilate degradation via hydroxylation; catechol from anthranilate: step 1/1. Functionally, electron transfer component of anthranilate 1,2-dioxygenase system. This is Anthranilate 1,2-dioxygenase electron transfer component from Acinetobacter baylyi (strain ATCC 33305 / BD413 / ADP1).